The sequence spans 412 residues: MIYAAEEVRARFARRGLSFDPTVEEIVRGILEAVREEGDEALDRFSRDLDGYPVEEVPKRAWREAYEDLDEDLRDALETARERIEAFYREEARGGFLRAEGGGVLAQLVRPLERVGVYVPGGSAPLLSTLLMTVVPAKVAGVREVIVASPPKVHPGVLAAAWVAGADRLFAMGGAQAIAALAYGTGRVPRVDKIVGPGNRYVVAAKRLVYGTVGIDGLAGPTETMIIADGSASPRLLAADLLAQAEHGPDSEPWLLSPDRALLERVEAELSRQLQDLPRAEVARQALEKGGLVLTKDLEEAFALANLYAPEHLSLALSDPLPWLEKVQNAGGVFLGEGSPEALGDYIAGPSHVMPTSGTARFQGGLAVRDFLKVIPVVGLSEGAARELAKKGALLARAEGLEGHARSLDLRR.

3 residues coordinate NAD(+): Tyr-118, Gln-176, and Asn-199. Thr-222, Gln-244, and His-247 together coordinate substrate. Residues Gln-244 and His-247 each contribute to the Zn(2+) site. Active-site proton acceptor residues include Glu-311 and His-312. Substrate-binding residues include His-312, Asp-345, Glu-399, and His-404. Asp-345 provides a ligand contact to Zn(2+). His-404 lines the Zn(2+) pocket.

It belongs to the histidinol dehydrogenase family. The cofactor is Zn(2+).

The catalysed reaction is L-histidinol + 2 NAD(+) + H2O = L-histidine + 2 NADH + 3 H(+). Its pathway is amino-acid biosynthesis; L-histidine biosynthesis; L-histidine from 5-phospho-alpha-D-ribose 1-diphosphate: step 9/9. Its function is as follows. Catalyzes the sequential NAD-dependent oxidations of L-histidinol to L-histidinaldehyde and then to L-histidine. This Thermus thermophilus (strain ATCC BAA-163 / DSM 7039 / HB27) protein is Histidinol dehydrogenase.